Consider the following 408-residue polypeptide: ORC1-type DNA replication protein 15 (408 aa).

ATP is bound by residues valine 60 to alanine 64, tyrosine 208, and arginine 220.

This sequence belongs to the CDC6/cdc18 family.

In terms of biological role, involved in regulation of DNA replication. The sequence is that of ORC1-type DNA replication protein 15 (cdc6o) from Haloarcula marismortui (strain ATCC 43049 / DSM 3752 / JCM 8966 / VKM B-1809) (Halobacterium marismortui).